Consider the following 444-residue polypeptide: Vacuolar protein sorting-associated protein 4B (444 aa).

Positions 4–82 (TSPNLQKAID…KEYLKNKEKK (79 aa)) constitute an MIT domain. Residues 19–82 (AQEDKAGNYE…KEYLKNKEKK (64 aa)) are a coiled coil. A compositionally biased stretch (basic and acidic residues) spans 78–88 (NKEKKAQKPVK). Residues 78 to 117 (NKEKKAQKPVKEGQPSPADEKGNDSDGEGESDDPEKKKLQ) form a disordered region. Serine 93, serine 102, and serine 108 each carry phosphoserine. ATP is bound at residue 174–181 (GPPGTGKS). A Phosphoserine modification is found at serine 410.

It belongs to the AAA ATPase family. In terms of assembly, proposed to be monomeric or homodimeric in nucleotide-free form and to oligomerize upon binding to ATP to form two stacked hexameric or heptameric rings with a central pore through which ESCRT-III substrates are translocated in an ATP-dependent manner. In vitro, associates on the inside of a helical tubular structure formed by a CHMP2A-CHMP3 polymer. Interacts with CHMP1A, CHMP1B, CHMP2A, CHMP4B and CHMP6. Interacts with VPS4A; the interaction suggests a heteromeric assembly with VPS4A. Interacts with VTA1.

The protein resides in the late endosome membrane. The catalysed reaction is ATP + H2O = ADP + phosphate + H(+). In terms of biological role, involved in late steps of the endosomal multivesicular bodies (MVB) pathway. Recognizes membrane-associated ESCRT-III assemblies and catalyzes their disassembly, possibly in combination with membrane fission. Redistributes the ESCRT-III components to the cytoplasm for further rounds of MVB sorting. MVBs contain intraluminal vesicles (ILVs) that are generated by invagination and scission from the limiting membrane of the endosome and mostly are delivered to lysosomes enabling degradation of membrane proteins, such as stimulated growth factor receptors, lysosomal enzymes and lipids. VPS4A/B are required for the exosomal release of SDCBP, CD63 and syndecan. Functionally, (Microbial infection) In conjunction with the ESCRT machinery also appears to function in topologically equivalent membrane fission events, such as the terminal stages of cytokinesis and enveloped virus budding (lentiviruses). This Pongo abelii (Sumatran orangutan) protein is Vacuolar protein sorting-associated protein 4B (VPS4B).